Reading from the N-terminus, the 1052-residue chain is Eukaryotic translation initiation factor 3 subunit A (1052 aa).

The PCI domain occupies 325-505 (IQYAASAVLL…GSLHFNNNIF (181 aa)). 2 coiled-coil regions span residues 568-712 (REHV…RLRE) and 769-882 (EKTA…SAQT). Basic and acidic residues-rich tracts occupy residues 570–600 (HVSNLSRRDEIEKQKEELEQSRRRRHQEQMQ) and 793–874 (KIRL…EQEK). Disordered regions lie at residues 570 to 606 (HVSNLSRRDEIEKQKEELEQSRRRRHQEQMQKHHQNQ) and 793 to 1052 (KIRL…DDKN). Polar residues-rich tracts occupy residues 875-887 (LSNLSAQTSQPTW) and 895-906 (APTTAAPSSMRV). Basic and acidic residues-rich tracts occupy residues 942–952 (DRGDRAPRDTG), 960–970 (DRGDRAPRDTG), 979–1013 (RAPRDFSGRSEPSRSGPRDFSGRSEAGRTSGERRA), and 1037–1052 (GSERRVNIPSRGDDKN).

This sequence belongs to the eIF-3 subunit A family. As to quaternary structure, component of the eukaryotic translation initiation factor 3 (eIF-3) complex.

Its subcellular location is the cytoplasm. In terms of biological role, RNA-binding component of the eukaryotic translation initiation factor 3 (eIF-3) complex, which is involved in protein synthesis of a specialized repertoire of mRNAs and, together with other initiation factors, stimulates binding of mRNA and methionyl-tRNAi to the 40S ribosome. The eIF-3 complex specifically targets and initiates translation of a subset of mRNAs involved in cell proliferation. The sequence is that of Eukaryotic translation initiation factor 3 subunit A from Monosiga brevicollis (Choanoflagellate).